Consider the following 420-residue polypeptide: Gamma-glutamyl phosphate reductase (420 aa).

Belongs to the gamma-glutamyl phosphate reductase family.

It is found in the cytoplasm. The catalysed reaction is L-glutamate 5-semialdehyde + phosphate + NADP(+) = L-glutamyl 5-phosphate + NADPH + H(+). It participates in amino-acid biosynthesis; L-proline biosynthesis; L-glutamate 5-semialdehyde from L-glutamate: step 2/2. In terms of biological role, catalyzes the NADPH-dependent reduction of L-glutamate 5-phosphate into L-glutamate 5-semialdehyde and phosphate. The product spontaneously undergoes cyclization to form 1-pyrroline-5-carboxylate. The polypeptide is Gamma-glutamyl phosphate reductase (Streptococcus pneumoniae serotype 2 (strain D39 / NCTC 7466)).